A 362-amino-acid chain; its full sequence is 3-dehydroquinate synthase (362 aa).

NAD(+)-binding positions include 70–75 (DGESYK), 104–108 (GVVGD), 128–129 (TT), K141, and K150. Zn(2+) is bound by residues E183, H246, and H263.

The protein belongs to the sugar phosphate cyclases superfamily. Dehydroquinate synthase family. Requires Co(2+) as cofactor. The cofactor is Zn(2+). It depends on NAD(+) as a cofactor.

It localises to the cytoplasm. The enzyme catalyses 7-phospho-2-dehydro-3-deoxy-D-arabino-heptonate = 3-dehydroquinate + phosphate. It participates in metabolic intermediate biosynthesis; chorismate biosynthesis; chorismate from D-erythrose 4-phosphate and phosphoenolpyruvate: step 2/7. Catalyzes the conversion of 3-deoxy-D-arabino-heptulosonate 7-phosphate (DAHP) to dehydroquinate (DHQ). The polypeptide is 3-dehydroquinate synthase (Saccharophagus degradans (strain 2-40 / ATCC 43961 / DSM 17024)).